A 411-amino-acid polypeptide reads, in one-letter code: Dihydrolipoyllysine-residue succinyltransferase component of 2-oxoglutarate dehydrogenase complex (411 aa).

In terms of domain architecture, Lipoyl-binding spans 2 to 77; it reads TTEIRVPTLG…EVNALLGAVE (76 aa). At K43 the chain carries N6-lipoyllysine. Over residues 82-100 the composition is skewed to low complexity; the sequence is SVAKSPSSSETSVSAAPSE. The disordered stretch occupies residues 82–115; that stretch reads SVAKSPSSSETSVSAAPSELEQSSSSNTMPPAPS. Residues 101–110 are compositionally biased toward polar residues; the sequence is LEQSSSSNTM. The 38-residue stretch at 111 to 148 folds into the Peripheral subunit-binding (PSBD) domain; sequence PPAPSAAKLMAENNIAKSDILGSGKRGQILKEDVLNVL. Residues H382 and D386 contribute to the active site.

This sequence belongs to the 2-oxoacid dehydrogenase family. As to quaternary structure, forms a 24-polypeptide structural core with octahedral symmetry. Part of the 2-oxoglutarate dehydrogenase (OGDH) complex composed of E1 (2-oxoglutarate dehydrogenase), E2 (dihydrolipoamide succinyltransferase) and E3 (dihydrolipoamide dehydrogenase); the complex contains multiple copies of the three enzymatic components (E1, E2 and E3). (R)-lipoate serves as cofactor.

It carries out the reaction N(6)-[(R)-dihydrolipoyl]-L-lysyl-[protein] + succinyl-CoA = N(6)-[(R)-S(8)-succinyldihydrolipoyl]-L-lysyl-[protein] + CoA. It functions in the pathway amino-acid degradation; L-lysine degradation via saccharopine pathway; glutaryl-CoA from L-lysine: step 6/6. Functionally, E2 component of the 2-oxoglutarate dehydrogenase (OGDH) complex which catalyzes the second step in the conversion of 2-oxoglutarate to succinyl-CoA and CO(2). In Bartonella vinsonii subsp. berkhoffii, this protein is Dihydrolipoyllysine-residue succinyltransferase component of 2-oxoglutarate dehydrogenase complex (sucB).